We begin with the raw amino-acid sequence, 355 residues long: 6-aminohexanoate-oligomer endohydrolase (355 aa).

Thr267 functions as the Nucleophile in the catalytic mechanism.

This sequence belongs to the peptidase S58 family. Heterotetramer composed of 4 alpha/beta heterodimers. Exists at the monomer/dimer/trimer equilibrium in aqueous solution. Post-translationally, expressed as an inactive precursor that is cleaved autocatalytically at Asn266/Thr267 to generate an active enzyme composed of an alpha subunit and a beta subunit.

The enzyme catalyses [N-(6-aminohexanoyl)]n + H2O = [N-(6-aminohexanoyl)]n-x + [N-(6-aminohexanoyl)]x.. It functions in the pathway xenobiotic degradation; nylon-6 oligomer degradation. In terms of biological role, involved in the degradation of nylon-6 oligomers. Degrades cyclic and linear oligomers of 6-aminohexanoate (Ahx) with a degree of polymerization greater than three by an endo-type mode. Cannot use Ahx cyclic dimer or the Ahx linear dimer. The protein is 6-aminohexanoate-oligomer endohydrolase of Paenarthrobacter ureafaciens.